Here is an 827-residue protein sequence, read N- to C-terminus: DNA ligase (827 aa).

NAD(+) is bound by residues 45–49 (DAAYD), 94–95 (SL), and E128. K130 (N6-AMP-lysine intermediate) is an active-site residue. The NAD(+) site is built by R151, E188, K304, and K328. Zn(2+) is bound by residues C451, C454, C475, and C481. A BRCT domain is found at 748 to 827 (AAAAAFSGRT…AEWLAMVEAA (80 aa)).

Belongs to the NAD-dependent DNA ligase family. LigA subfamily. Mg(2+) is required as a cofactor. It depends on Mn(2+) as a cofactor.

It catalyses the reaction NAD(+) + (deoxyribonucleotide)n-3'-hydroxyl + 5'-phospho-(deoxyribonucleotide)m = (deoxyribonucleotide)n+m + AMP + beta-nicotinamide D-nucleotide.. Its function is as follows. DNA ligase that catalyzes the formation of phosphodiester linkages between 5'-phosphoryl and 3'-hydroxyl groups in double-stranded DNA using NAD as a coenzyme and as the energy source for the reaction. It is essential for DNA replication and repair of damaged DNA. The sequence is that of DNA ligase from Methylobacterium sp. (strain 4-46).